The sequence spans 544 residues: POTE ankyrin domain family member B2 (544 aa).

ANK repeat units lie at residues 135–167 (QKRT…VLDN), 168–200 (KKRT…IQDE), 201–233 (YGNT…SKNK), 234–266 (CGLT…ALDR), and 267–299 (YGRT…SQDL). Residues 332 to 457 (SSENSNPEQD…NTGISQDEIL (126 aa)) form a disordered region. Basic and acidic residues-rich tracts occupy residues 340 to 355 (QDLK…RLKV) and 364 to 375 (MSQEPEINKDCD). A compositionally biased stretch (polar residues) spans 439–457 (TQKQLSEEQNTGISQDEIL).

This sequence belongs to the POTE family.

The sequence is that of POTE ankyrin domain family member B2 (POTEB2) from Homo sapiens (Human).